Reading from the N-terminus, the 76-residue chain is Mu-scoloptoxin(15)-Ssm1a (76 aa).

The signal sequence occupies residues 1 to 23 (MEKKIIFLVFLVALLALPGFIST). Positions 33 to 36 (KKRK) are important for inhibition of KCNQ4. 2 disulfides stabilise this stretch: cysteine 43/cysteine 69 and cysteine 47/cysteine 71.

The protein belongs to the scoloptoxin-15 family. As to expression, expressed by the venom gland.

The protein localises to the secreted. Blocks voltage-gated potassium channels Kv7.4/KCNQ4 (IC(50)=2.5 uM), Kv7.1/KCNQ1 (IC(50)=2.8 uM), Kv7.2/KCNQ2 (IC(50)=2.7 uM) and Kv7.5/KCNQ5 (IC(50)=2.7 uM). Targets the pore domain, in particular negatively charged residues 'Asp-266' and 'Asp-288', of KCNQ4 and probably other KCNQ channel family members where these residues are conserved. In vivo, shows vasoconstrictive activity resulting in acute hypertension when injected intravenously in mice. Also induces coronary vasospasms ultimately leading to heart failure. Induces seizures when injected into the hippocampus of mice. Decreases respiratory rate while increasing respiratory amplitude, probably by triggering a contraction of the bronchial ring. The chain is Mu-scoloptoxin(15)-Ssm1a from Scolopendra mutilans (Chinese red-headed centipede).